A 528-amino-acid polypeptide reads, in one-letter code: uncharacterized protein (528 aa).

The tract at residues 1–51 (MEHPKRPTPKNEALHIDASGRGESSFSVHRSHSGGHEPFAPSPGSSIGASV) is disordered. Repeat copies occupy residues 185-213 (EQEEEYISNSLLKKIQQLNQDKDYLVKKY) and 285-313 (EQEQELLINTLGKRMSQMNEEKRKLQQAL). A 2 X 29 AA repeats region spans residues 185–313 (EQEEEYISNS…EEKRKLQQAL (129 aa)). Disordered regions lie at residues 467–497 (RAHGSSPPTVVVQPSTSRAGSNSTANINNDT) and 509–528 (TVHPTQRATPARNERPDSHY). Residues 472 to 496 (SPPTVVVQPSTSRAGSNSTANINND) show a composition bias toward polar residues.

This is an uncharacterized protein from Caenorhabditis elegans.